The sequence spans 464 residues: ATP synthase subunit beta 2 (464 aa).

147–154 provides a ligand contact to ATP; it reads GGAGVGKT.

Belongs to the ATPase alpha/beta chains family. As to quaternary structure, F-type ATPases have 2 components, CF(1) - the catalytic core - and CF(0) - the membrane proton channel. CF(1) has five subunits: alpha(3), beta(3), gamma(1), delta(1), epsilon(1). CF(0) has four main subunits: a(1), b(1), b'(1) and c(9-12).

It is found in the cell inner membrane. It carries out the reaction ATP + H2O + 4 H(+)(in) = ADP + phosphate + 5 H(+)(out). In terms of biological role, produces ATP from ADP in the presence of a proton gradient across the membrane. The catalytic sites are hosted primarily by the beta subunits. The sequence is that of ATP synthase subunit beta 2 from Cereibacter sphaeroides (strain ATCC 17029 / ATH 2.4.9) (Rhodobacter sphaeroides).